A 222-amino-acid polypeptide reads, in one-letter code: Type II restriction enzyme MjaI (222 aa).

The catalysed reaction is Endonucleolytic cleavage of DNA to give specific double-stranded fragments with terminal 5'-phosphates.. Functionally, a P subtype restriction enzyme that recognizes the double-stranded sequence 5'-CTAG-3'; the cleavage site is unknown. The chain is Type II restriction enzyme MjaI (mjaIR) from Methanocaldococcus jannaschii (strain ATCC 43067 / DSM 2661 / JAL-1 / JCM 10045 / NBRC 100440) (Methanococcus jannaschii).